Here is a 671-residue protein sequence, read N- to C-terminus: uncharacterized protein (671 aa).

Residues 39-56 (ATVTVVILLLILLLGWGY) traverse the membrane as a helical segment.

It is found in the membrane. This is an uncharacterized protein from Treponema pallidum (strain Nichols).